A 357-amino-acid polypeptide reads, in one-letter code: 39 kDa FK506-binding nuclear protein (357 aa).

S92 is modified (phosphoserine). The tract at residues K113–G251 is disordered. Positions D120–E182 are enriched in acidic residues. Phosphoserine occurs at positions 193 and 197. Residues E222–A237 are compositionally biased toward basic and acidic residues. The PPIase FKBP-type domain maps to G269–H357.

The protein belongs to the FKBP-type PPIase family. As to expression, ubiquitously expressed, highest levels in ovary.

The protein resides in the nucleus. The enzyme catalyses [protein]-peptidylproline (omega=180) = [protein]-peptidylproline (omega=0). PPIases accelerate the folding of proteins. May function in a signal transduction cascade during early development. The protein is 39 kDa FK506-binding nuclear protein of Drosophila melanogaster (Fruit fly).